The sequence spans 743 residues: Coiled-coil domain-containing protein 30 (743 aa).

Basic and acidic residues-rich tracts occupy residues 1-22 (MSQE…REKQ) and 133-193 (SPKE…MKPE). Disordered stretches follow at residues 1 to 25 (MSQE…QLAS), 114 to 193 (ENIC…MKPE), 208 to 233 (SLLQ…GDKL), and 695 to 715 (SKEA…LVCS). 2 coiled-coil regions span residues 21–98 (KQLA…QLNH) and 165–580 (REGQ…LIHS). Positions 208 to 223 (SLLQSQSSGDSSDDSG) are enriched in low complexity.

The protein belongs to the prefoldin subunit beta family.

The polypeptide is Coiled-coil domain-containing protein 30 (CCDC30) (Macaca fascicularis (Crab-eating macaque)).